Here is a 74-residue protein sequence, read N- to C-terminus: UPF0057 membrane protein At4g30660 (74 aa).

A run of 2 helical transmembrane segments spans residues N4 to F24 and L37 to F57.

This sequence belongs to the UPF0057 (PMP3) family.

It localises to the membrane. This chain is UPF0057 membrane protein At4g30660, found in Arabidopsis thaliana (Mouse-ear cress).